The chain runs to 197 residues: Probable GTP-binding protein EngB (197 aa).

The EngB-type G domain occupies 26 to 197; that stretch reads DLPEIALAGR…TSWDAILESL (172 aa). GTP contacts are provided by residues 34 to 41, 61 to 65, 79 to 82, 146 to 149, and 178 to 180; these read GRSNVGKS, GKTQS, DVPG, TKAD, and FSS. 2 residues coordinate Mg(2+): S41 and T63.

Belongs to the TRAFAC class TrmE-Era-EngA-EngB-Septin-like GTPase superfamily. EngB GTPase family. Mg(2+) serves as cofactor.

Functionally, necessary for normal cell division and for the maintenance of normal septation. This chain is Probable GTP-binding protein EngB, found in Streptococcus mutans serotype c (strain ATCC 700610 / UA159).